Consider the following 674-residue polypeptide: Pannexin-2 (674 aa).

Topologically, residues 11–53 (MATALLAGEKLRELILPGSQDDKAGALAALLLQLKLELPFDRV) are cytoplasmic. The chain crosses the membrane as a helical span at residues 54–74 (VTIGTVLVPILLVTLVFTKNF). At 75–125 (AEEPIYCYTPHNFTRDQALYARGYCWTELRDALPGVDASLWPSLFEHKFLP) the chain is on the extracellular side. An N-linked (GlcNAc...) asparagine glycan is attached at Asn86. Residues 126-146 (YALLAFAAIMYVPALGWEFLA) form a helical membrane-spanning segment. Residues 147 to 230 (STRLTSELNF…NFLAKLYLAR (84 aa)) lie on the Cytoplasmic side of the membrane. A helical membrane pass occupies residues 231–251 (HVLILLLSVVPISYLCTYYAT). Residues 252–295 (QKQNEFTCALGASPDGPVGSAGPTVRVSCKLPSVQLQRIIAGVD) are Extracellular-facing. A helical membrane pass occupies residues 296-316 (IVLLCFMNLIILVNLIHLFIF). Residues 317–674 (RKSNFIFDKL…PRTVVSTVEF (358 aa)) are Cytoplasmic-facing. The segment covering 394-408 (TTPTVRDSGIQTVDP) has biased composition (polar residues). Disordered regions lie at residues 394 to 426 (TTPT…VVKR) and 485 to 510 (AHHY…KKHT). A phosphoserine mark is found at Ser590 and Ser601.

It belongs to the pannexin family. Forms PANX1/PANX2-heteromeric intercellular channels on coexpression in paired Xenopus oocytes. Does not form homomeric channels. Post-translationally, S-palmitoylated in neural stem and progenitor cells. Cleaved by CASP3 and CASP7 during apoptosis. Cleavage has no effect on it function. In terms of tissue distribution, expressed in the eye, thyroid, prostate, kidney and liver. Abundantly expressed in the CNS, including hippocampus, olfactory bulb, cortex, cerebellum. Not detected in the white matter.

The protein localises to the cell membrane. The protein resides in the golgi apparatus membrane. It is found in the endoplasmic reticulum membrane. In terms of biological role, structural component of the gap junctions and the hemichannels. In Rattus norvegicus (Rat), this protein is Pannexin-2 (Panx2).